A 643-amino-acid chain; its full sequence is Threonine--tRNA ligase (643 aa).

One can recognise a TGS domain in the interval 1 to 61 (MPIITLPDGS…EQDATLEIIT (61 aa)). Positions 243-534 (DHRKIGKALD…ITEEYAGFFP (292 aa)) are catalytic. 3 residues coordinate Zn(2+): Cys-334, His-385, and His-511.

The protein belongs to the class-II aminoacyl-tRNA synthetase family. In terms of assembly, homodimer. Requires Zn(2+) as cofactor.

Its subcellular location is the cytoplasm. The catalysed reaction is tRNA(Thr) + L-threonine + ATP = L-threonyl-tRNA(Thr) + AMP + diphosphate + H(+). Functionally, catalyzes the attachment of threonine to tRNA(Thr) in a two-step reaction: L-threonine is first activated by ATP to form Thr-AMP and then transferred to the acceptor end of tRNA(Thr). Also edits incorrectly charged L-seryl-tRNA(Thr). The chain is Threonine--tRNA ligase from Haemophilus influenzae (strain ATCC 51907 / DSM 11121 / KW20 / Rd).